The sequence spans 86 residues: Omega-theraphotoxin-Hhn1d (86 aa).

A signal peptide spans Met1–Ala21. Residues Ser22 to Arg50 constitute a propeptide that is removed on maturation. Disulfide bonds link Cys52-Cys66, Cys59-Cys71, and Cys65-Cys78.

The protein belongs to the neurotoxin 10 (Hwtx-1) family. 17 (Hntx-9) subfamily. As to expression, expressed by the venom gland.

It is found in the secreted. Ion channel inhibitor. This is Omega-theraphotoxin-Hhn1d from Cyriopagopus hainanus (Chinese bird spider).